Consider the following 21-residue polypeptide: Serine protease inhibitor 1 (21 aa).

The region spanning 1-21 (EQQCTPGQTKKEDCNNCTSGD) is the Pacifastin domain. The interval 1–21 (EQQCTPGQTKKEDCNNCTSGD) is disordered.

This sequence belongs to the protease inhibitor I19 family. Expressed in hemolymph.

It is found in the secreted. Functionally, probable serine protease inhibitor. The protein is Serine protease inhibitor 1 of Melanoplus sanguinipes (Migratory grasshopper).